We begin with the raw amino-acid sequence, 175 residues long: MLILNQRTQQLATDSVALAYDERKRSRLKVTLASGAEAGIFLERGDHLHGGDKLAAEDGSAVVEILAAPEKLIEAIADSPLLFARAAYHLGNRHVPVQILPTENGGKLRFQTDHVLAEMVRGLGCSVSDAEAPFQPESGAYGGGHHHGDESATDLHNPGHGPHRSVPKIHEFKPR.

The tract at residues 134-175 (FQPESGAYGGGHHHGDESATDLHNPGHGPHRSVPKIHEFKPR) is disordered.

This sequence belongs to the UreE family.

The protein resides in the cytoplasm. Its function is as follows. Involved in urease metallocenter assembly. Binds nickel. Probably functions as a nickel donor during metallocenter assembly. This Dechloromonas aromatica (strain RCB) protein is Urease accessory protein UreE.